Consider the following 216-residue polypeptide: Probable transaldolase (216 aa).

The active-site Schiff-base intermediate with substrate is the Lys83.

This sequence belongs to the transaldolase family. Type 3B subfamily.

The protein localises to the cytoplasm. It catalyses the reaction D-sedoheptulose 7-phosphate + D-glyceraldehyde 3-phosphate = D-erythrose 4-phosphate + beta-D-fructose 6-phosphate. It participates in carbohydrate degradation; pentose phosphate pathway; D-glyceraldehyde 3-phosphate and beta-D-fructose 6-phosphate from D-ribose 5-phosphate and D-xylulose 5-phosphate (non-oxidative stage): step 2/3. Its function is as follows. Transaldolase is important for the balance of metabolites in the pentose-phosphate pathway. The protein is Probable transaldolase of Thermosipho africanus (strain TCF52B).